Consider the following 542-residue polypeptide: CTP synthase (542 aa).

An amidoligase domain region spans residues 1–265; that stretch reads MTRYIFVTGG…DDIVVERFGL (265 aa). Residue S13 participates in CTP binding. S13 is a UTP binding site. Residues 14 to 19 and D71 each bind ATP; that span reads SLGKGI. Residues D71 and E139 each contribute to the Mg(2+) site. CTP is bound by residues 146-148, 186-191, and K222; these read DIE and KTKPTQ. Residues 186–191 and K222 each bind UTP; that span reads KTKPTQ. Residues 290-541 form the Glutamine amidotransferase type-1 domain; it reads TIAMVGKYME…VNAALKYSGK (252 aa). G351 contributes to the L-glutamine binding site. C378 serves as the catalytic Nucleophile; for glutamine hydrolysis. L-glutamine is bound by residues 379–382, E402, and R469; that span reads LGMQ. Active-site residues include H514 and E516.

Belongs to the CTP synthase family. In terms of assembly, homotetramer.

The catalysed reaction is UTP + L-glutamine + ATP + H2O = CTP + L-glutamate + ADP + phosphate + 2 H(+). The enzyme catalyses L-glutamine + H2O = L-glutamate + NH4(+). It catalyses the reaction UTP + NH4(+) + ATP = CTP + ADP + phosphate + 2 H(+). It participates in pyrimidine metabolism; CTP biosynthesis via de novo pathway; CTP from UDP: step 2/2. Its activity is regulated as follows. Allosterically activated by GTP, when glutamine is the substrate; GTP has no effect on the reaction when ammonia is the substrate. The allosteric effector GTP functions by stabilizing the protein conformation that binds the tetrahedral intermediate(s) formed during glutamine hydrolysis. Inhibited by the product CTP, via allosteric rather than competitive inhibition. Its function is as follows. Catalyzes the ATP-dependent amination of UTP to CTP with either L-glutamine or ammonia as the source of nitrogen. Regulates intracellular CTP levels through interactions with the four ribonucleotide triphosphates. The protein is CTP synthase of Pseudomonas aeruginosa (strain LESB58).